A 211-amino-acid polypeptide reads, in one-letter code: MPPKGNKHPIAQRQSQQKLQKQWDEEETWDDSQAEEVSDEEAEEQMESWDSLDEEDLEDVEEETIASDKAPSFKKPVRSQPPKTIPPLPPQPCSLKASRRWDTVSIAGSPTAPAAPTKRLEKTPRVRKTSSAIATRQDSPATQELRKRIFPTLYAIFQQSRGQQLELKVKNRSLRSLTRSCLYHRSEDQLQRTLEDAEALFNKYCSVSLKD.

Disordered regions lie at residues M1–L95 and A107–P140. Positions D24 to I65 are enriched in acidic residues. Residues K83–P92 show a composition bias toward pro residues. Residues T129 to P140 show a composition bias toward polar residues. The interval Y154–C181 is necessary for nuclear subcellular location. The tract at residues S160–S180 is RS-repeat; required for splicing enhancer activity.

It belongs to the adenoviridae splicing factor family. As to quaternary structure, homooligomer. Interacts with DBP; this interaction occurs at a unique vertex during genome packaging. Interacts with IVa2; this interaction occurs at a unique vertex during genome packaging and seems to potentiate IVa2 and 33K oligomerization. Post-translationally, phosphorylated in vitro by human PKA and PRKDC. PRKDC inhibits, whereas PKA activates the splicing factor.

It is found in the host nucleus. Its function is as follows. Promotes alternative splicing of late transcripts by promoting splicing at weak 3' splice sites. Required for the temporal activation of major late pre-mRNA splicing at late times of infection. Induces the splicing and expression of the late capsid vertex protein. Functionally, probably functions as the small terminase that is part of the molecular motor that translocates genomic DNA in empty capsid during DNA packaging. This motor is located at a unique vertex and comprises at least the IVa2 ATPase, the small terminase 33K and probably a portal. Forms a ring-like structure of about 17 nm in which genomic DNA is translocated into the capsid. Stimulates IVa2 ATPase activity in the presence of the viral genome. Once the DNA is packaged, the terminase detaches: the 33K protein is present in the empty particles, but not in the mature virions. Also involved in virion assembly. The protein is Protein 33K of Human adenovirus F serotype 40 (HAdV-40).